The sequence spans 211 residues: Dual specificity phosphatase 29 (211 aa).

The 146-residue stretch at 47 to 192 (HVNEVWPGIY…LRTLDIQLAI (146 aa)) folds into the Tyrosine-protein phosphatase domain. 136–143 (HCAMGRSR) is a binding site for substrate. The active-site Phosphocysteine intermediate is Cys137.

This sequence belongs to the protein-tyrosine phosphatase family. Non-receptor class dual specificity subfamily.

Its subcellular location is the cytoplasm. It localises to the nucleus. It carries out the reaction O-phospho-L-tyrosyl-[protein] + H2O = L-tyrosyl-[protein] + phosphate. The catalysed reaction is O-phospho-L-seryl-[protein] + H2O = L-seryl-[protein] + phosphate. It catalyses the reaction O-phospho-L-threonyl-[protein] + H2O = L-threonyl-[protein] + phosphate. Dual specificity phosphatase able to dephosphorylate phosphotyrosine, phosphoserine and phosphothreonine residues within the same substrate, with a preference for phosphotyrosine as a substrate. Involved in the modulation of AMPK and MAPK1/2 signaling pathways. This is Dual specificity phosphatase 29 (dusp29) from Callorhinchus milii (Ghost shark).